The following is a 976-amino-acid chain: Metabotropic glutamate receptor (976 aa).

Residues 1–25 form the signal peptide; that stretch reads MKQKNNNGTILVVVMVLSWSRVVDL. Residues 26–626 are Extracellular-facing; it reads KSPSNTHTQD…IQYMKWNSLF (601 aa). 2 N-linked (GlcNAc...) asparagine glycosylation sites follow: Asn112 and Asn143. Residues Ser158 and 179 to 181 each bind L-glutamate; that span reads AST. N-linked (GlcNAc...) asparagine glycosylation is present at Asn216. Tyr229 is an L-glutamate binding site. Asn299 carries N-linked (GlcNAc...) asparagine glycosylation. Asp310 provides a ligand contact to L-glutamate. Asn386 carries an N-linked (GlcNAc...) asparagine glycan. Lys417 provides a ligand contact to L-glutamate. 2 N-linked (GlcNAc...) asparagine glycosylation sites follow: Asn491 and Asn524. Residues 627-649 traverse the membrane as a helical segment; it reads ALIPMAIAIFGIALTSIVIVLFA. Residues 650–663 lie on the Cytoplasmic side of the membrane; sequence KNHDTPLVRASGRE. The helical transmembrane segment at 664–684 threads the bilayer; sequence LSYTLLFGILVCYCNTFALIA. Residues 685–695 are Extracellular-facing; that stretch reads KPTIGSCVLQR. The chain crosses the membrane as a helical span at residues 696 to 714; it reads FGIGVGFSIIYSALLTKTN. Over 715–738 the chain is Cytoplasmic; that stretch reads RISRIFHSASKSAQRLKYISPQSQ. Residues 739–759 traverse the membrane as a helical segment; the sequence is VVITTSLIAIQVLITMIWMVV. Residues 760-782 are Extracellular-facing; the sequence is EPPGTRFYYPDRREVILKCKIQD. Residues 783 to 804 traverse the membrane as a helical segment; that stretch reads MSFLFSQLYNMILITICTIYAI. Residues 805–817 are Cytoplasmic-facing; sequence KTRKIPENFNESK. A helical membrane pass occupies residues 818–840; it reads FIGFTMYTTCIIWLAFVPIYFGT. The Extracellular segment spans residues 841–850; it reads GNSYEVQTTT. A helical transmembrane segment spans residues 851–876; it reads LCISISLSASVALVCLYSPKVYILVF. Residues 877 to 976 are Cytoplasmic-facing; that stretch reads HPDKNVRKLT…VEPICHIVNK (100 aa). A disordered region spans residues 920-946; it reads LTGGAVGTNASSSTLPTQNSPHLDEAS. The segment covering 927 to 946 has biased composition (polar residues); the sequence is TNASSSTLPTQNSPHLDEAS.

The protein belongs to the G-protein coupled receptor 3 family. In terms of tissue distribution, expressed in the neurons of the larval CNS from the beginning of the first until the third instar. Expression in the third-instar larval CNS is restricted to a discrete number of somas and projections in the brain lobes and in the ventral ganglion. In the ventral nerve cord, expression is detected both in somas and projections. Expressed in the antennal lobes, the optic lobes, the central complex and the median bundle in the adult CNS.

The protein localises to the cell membrane. Its function is as follows. G-protein coupled receptor for glutamate. Ligand binding causes a conformation change that triggers signaling via guanine nucleotide-binding proteins (G proteins) and modulates the activity of down-stream effectors. This Drosophila melanogaster (Fruit fly) protein is Metabotropic glutamate receptor (mGluR).